Consider the following 105-residue polypeptide: Chloroacetanilide N-alkylformylase 2, ferredoxin component (105 aa).

The region spanning proline 2–aspartate 105 is the 2Fe-2S ferredoxin-type domain. [2Fe-2S] cluster contacts are provided by cysteine 40, cysteine 46, cysteine 49, and cysteine 86.

It belongs to the adrenodoxin/putidaredoxin family. In terms of assembly, the chloroacetanilide N-alkylformylase multicomponent enzyme system is composed of an oxygenase component (CndA) and an electron transfer component formed by a ferredoxin reductase (CndC1) and a ferredoxin (CndB1). In vitro, chloroacetanilide N-alkylformylase assays in which CndB1 is substituted for CndB2 demonstrate that the two enzymes possess nearly identical activities. It depends on [2Fe-2S] cluster as a cofactor.

In terms of biological role, component of the chloroacetanilide N-alkylformylase multicomponent enzyme system involved in the degradation of chloroacetanilide herbicides (N-alkoxyalkyl-N-chloroacetyl-substituted aniline derivatives). In vitro, functions as an intermediate electron transfer protein. The protein is Chloroacetanilide N-alkylformylase 2, ferredoxin component of Rhizorhabdus wittichii (strain DC-6 / KACC 16600) (Sphingomonas wittichii).